Consider the following 87-residue polypeptide: LYR motif-containing protein 2 (87 aa).

The N-terminal 19 residues, 1-19 (MGSRLPPAALTLKQFLVRQ), are a transit peptide targeting the mitochondrion.

The protein belongs to the complex I LYR family.

It is found in the mitochondrion. In terms of biological role, involved in efficient integration of the N-module into mitochondrial respiratory chain complex I. The sequence is that of LYR motif-containing protein 2 (lyrm2) from Xenopus laevis (African clawed frog).